Here is a 422-residue protein sequence, read N- to C-terminus: CinA-like protein (422 aa).

It belongs to the CinA family.

The polypeptide is CinA-like protein (Mycolicibacterium gilvum (strain PYR-GCK) (Mycobacterium gilvum (strain PYR-GCK))).